We begin with the raw amino-acid sequence, 74 residues long: Anionic peptide clone 9 (74 aa).

The N-terminal stretch at 1–24 (MVSKSLIVLLLVSVLVSTFFTTEA) is a signal peptide.

It belongs to the non-disulfide-bridged peptide (NDBP) superfamily. Long chain multifunctional peptide (group 2) family. As to expression, expressed by the venom gland.

It is found in the secreted. May be an antimicrobial peptide. This chain is Anionic peptide clone 9, found in Tityus costatus (Brazilian scorpion).